The sequence spans 156 residues: Ribosome maturation factor RimP (156 aa).

It belongs to the RimP family.

It is found in the cytoplasm. Required for maturation of 30S ribosomal subunits. The sequence is that of Ribosome maturation factor RimP from Bacillus cereus (strain G9842).